A 351-amino-acid polypeptide reads, in one-letter code: F-box protein At1g47810 (351 aa).

Residues 8–54 form the F-box domain; sequence LQSLDPIPVDVLFEIFLNLPAKFLARFVCVSKLWAKIIRNQDFIRSF.

This Arabidopsis thaliana (Mouse-ear cress) protein is F-box protein At1g47810.